Consider the following 44-residue polypeptide: Large ribosomal subunit protein bL34 (44 aa).

This sequence belongs to the bacterial ribosomal protein bL34 family.

The polypeptide is Large ribosomal subunit protein bL34 (Wolbachia sp. subsp. Brugia malayi (strain TRS)).